The chain runs to 277 residues: Bleomycin hydrolase (277 aa).

Cys53 is a catalytic residue.

Belongs to the peptidase C1 family. As to quaternary structure, homohexamer. Interacts with NUDT12 (via ANK repeats).

It is found in the cytoplasm. The protein resides in the cytoplasmic granule. The enzyme catalyses Inactivates bleomycin B2 (a cytotoxic glycometallopeptide) by hydrolysis of a carboxyamide bond of beta-aminoalanine, but also shows general aminopeptidase activity. The specificity varies somewhat with source, but amino acid arylamides of Met, Leu and Ala are preferred.. With respect to regulation, strongly inhibited by leupeptin, puromycin, NEM, and divalent cations. In terms of biological role, the normal physiological role of BLM hydrolase is unknown, but it catalyzes the inactivation of the antitumor drug BLM (a glycopeptide) by hydrolyzing the carboxamide bond of its B-aminoalaninamide moiety thus protecting normal and malignant cells from BLM toxicity. The polypeptide is Bleomycin hydrolase (BLMH) (Oryctolagus cuniculus (Rabbit)).